Here is a 212-residue protein sequence, read N- to C-terminus: Prolactin-3C1 (212 aa).

The N-terminal stretch at 1 to 29 (MQLSLTQARTWKGLFLLVSCMFLWVYVTA) is a signal peptide. An intrachain disulfide couples Cys80 to Cys188. N-linked (GlcNAc...) asparagine glycosylation is present at Asn100.

It belongs to the somatotropin/prolactin family. As to expression, expressed exclusively in decidua.

The protein localises to the secreted. The polypeptide is Prolactin-3C1 (Prl3c1) (Mus musculus (Mouse)).